Here is a 508-residue protein sequence, read N- to C-terminus: Histidine--tRNA ligase, cytoplasmic (508 aa).

One can recognise a WHEP-TRS domain in the interval 3-59 (SPALEELVLNSRHRLVRGLKQQKASADQIEEEVAKLLKLKAQLGHDESKQKFVLKTP). At serine 66 the chain carries Phosphoserine. L-histidine is bound by residues 130–132 (DLT), arginine 157, aspartate 177, arginine 326, and 330–331 (YY).

It belongs to the class-II aminoacyl-tRNA synthetase family. As to quaternary structure, homodimer.

It is found in the cytoplasm. It catalyses the reaction tRNA(His) + L-histidine + ATP = L-histidyl-tRNA(His) + AMP + diphosphate + H(+). Its function is as follows. Catalyzes the ATP-dependent ligation of histidine to the 3'-end of its cognate tRNA, via the formation of an aminoacyl-adenylate intermediate (His-AMP). Plays a role in axon guidance. This is Histidine--tRNA ligase, cytoplasmic (HARS1) from Mesocricetus auratus (Golden hamster).